The sequence spans 406 residues: Pygopus homolog 2 (406 aa).

Disordered stretches follow at residues 1–73 (MAAS…DHLV) and 106–323 (VQGG…PQPP). An N-acetylalanine modification is found at Ala2. Phosphoserine is present on Ser40. A Nuclear localization signal motif is present at residues 41-47 (PEKKRRK). 2 stretches are compositionally biased toward pro residues: residues 131-141 (RQPPPFPPNPM) and 149-158 (PQGPGYPPPG). Polar residues predominate over residues 164–179 (SQPFNQPLGQNFSPPS). A compositionally biased stretch (pro residues) spans 236–252 (SLPPNTSPFPGPDPGFP). Positions 285–296 (NGNQPSFPPNSS) are enriched in polar residues. Thr302 is modified (phosphothreonine). The PHD-type zinc-finger motif lies at 327 to 385 (VYPCGACRSEVNDDQDAILCEASCQKWFHRECTGMTESAYGLLTTEASAVWACDLCLKT).

Binds to BCL9 via the PHD-type zinc finger motif, and thereby becomes part of the nuclear beta-catenin/TCF complex.

Its subcellular location is the nucleus. In terms of biological role, involved in signal transduction through the Wnt pathway. The sequence is that of Pygopus homolog 2 (PYGO2) from Homo sapiens (Human).